Reading from the N-terminus, the 550-residue chain is Cytokinin dehydrogenase 10 (550 aa).

The signal sequence occupies residues 1–26 (MMPRAQLTTFLIVTSFLSTVPYLRAP). Positions 64–245 (VHATPNGVFR…TRARIRLEPA (182 aa)) constitute an FAD-binding PCMH-type domain. Residues glycine 100, lysine 101, and glycine 102 each coordinate FAD. A Pros-8alpha-FAD histidine modification is found at histidine 103. FAD contacts are provided by serine 104, glutamine 108, aspartate 169, threonine 174, serine 180, isoleucine 184, and isoleucine 235. N-linked (GlcNAc...) asparagine glycosylation occurs at asparagine 289. 3 residues coordinate FAD: tyrosine 489, serine 524, and glutamine 527. The interval 523–550 (LSPGQGIFPPPPPPSPPPPAAGEPITAS) is disordered. The segment covering 530–543 (FPPPPPPSPPPPAA) has biased composition (pro residues).

Belongs to the oxygen-dependent FAD-linked oxidoreductase family. As to quaternary structure, monomer. It depends on FAD as a cofactor.

It localises to the secreted. The protein resides in the extracellular space. It catalyses the reaction N(6)-dimethylallyladenine + A + H2O = 3-methyl-2-butenal + adenine + AH2. Catalyzes the oxidation of cytokinins, a family of N(6)-substituted adenine derivatives that are plant hormones, where the substituent is an isopentenyl group. This chain is Cytokinin dehydrogenase 10 (CKX10), found in Oryza sativa subsp. japonica (Rice).